Here is a 543-residue protein sequence, read N- to C-terminus: CTP synthase (543 aa).

Residues 1-267 (MKQTKYIFVT…LNPIAEILDL (267 aa)) form an amidoligase domain region. Serine 15 provides a ligand contact to CTP. Position 15 (serine 15) interacts with UTP. ATP-binding positions include 16–21 (SLGKGI) and aspartate 73. Positions 73 and 141 each coordinate Mg(2+). Residues 148 to 150 (DIE), 188 to 193 (KTKPTQ), and lysine 224 contribute to the CTP site. UTP contacts are provided by residues 188-193 (KTKPTQ) and lysine 224. A Glutamine amidotransferase type-1 domain is found at 292–543 (KIAFVGKYVD…IKAAINYEDN (252 aa)). L-glutamine is bound at residue glycine 354. The active-site Nucleophile; for glutamine hydrolysis is cysteine 381. Residues 382–385 (LGMQ), glutamate 405, and arginine 473 contribute to the L-glutamine site. Residues histidine 516 and glutamate 518 contribute to the active site.

The protein belongs to the CTP synthase family. Homotetramer.

It catalyses the reaction UTP + L-glutamine + ATP + H2O = CTP + L-glutamate + ADP + phosphate + 2 H(+). The catalysed reaction is L-glutamine + H2O = L-glutamate + NH4(+). The enzyme catalyses UTP + NH4(+) + ATP = CTP + ADP + phosphate + 2 H(+). The protein operates within pyrimidine metabolism; CTP biosynthesis via de novo pathway; CTP from UDP: step 2/2. Allosterically activated by GTP, when glutamine is the substrate; GTP has no effect on the reaction when ammonia is the substrate. The allosteric effector GTP functions by stabilizing the protein conformation that binds the tetrahedral intermediate(s) formed during glutamine hydrolysis. Inhibited by the product CTP, via allosteric rather than competitive inhibition. Catalyzes the ATP-dependent amination of UTP to CTP with either L-glutamine or ammonia as the source of nitrogen. Regulates intracellular CTP levels through interactions with the four ribonucleotide triphosphates. The chain is CTP synthase from Campylobacter jejuni subsp. doylei (strain ATCC BAA-1458 / RM4099 / 269.97).